The following is a 591-amino-acid chain: uncharacterized protein (591 aa).

Residues 1 to 10 are compositionally biased toward gly residues; sequence MSIRGVGGNG. Disordered regions lie at residues 1-37, 110-135, 324-344, and 487-517; these read MSIR…KVED, RSSA…GYRE, EESG…AQGP, and GHYQ…TPPL. Positions 11-32 are enriched in polar residues; it reads NSRIPSHNGDGSNRRSQNTKGN. The segment covering 110 to 132 has biased composition (low complexity); sequence RSSATRAAESGSSSRTARGASSG. Over residues 490–507 the composition is skewed to basic and acidic residues; sequence QDPRASDYDLPRASDYDL.

It to C.muridarum TC_0268.

This is an uncharacterized protein from Chlamydia trachomatis serovar D (strain ATCC VR-885 / DSM 19411 / UW-3/Cx).